We begin with the raw amino-acid sequence, 393 residues long: N-acyl-phosphatidylethanolamine-hydrolyzing phospholipase D (393 aa).

Residue M1 is modified to N-acetylmethionine. Positions 1–16 (MDENESNQSLMTSSQY) are enriched in polar residues. Positions 1–40 (MDENESNQSLMTSSQYPKEAVRKRQNSARNSGGSDSSRFS) are disordered. Positions 185 and 187 each coordinate Zn(2+). An N-acyl-1,2-diacyl-sn-glycero-3-phosphoethanolamine is bound at residue Y188. Zn(2+) contacts are provided by D189, H190, and H253. 2 residues coordinate deoxycholate: K256 and M260. Residue D284 participates in Zn(2+) binding. H321 contributes to the an N-acyl-1,2-diacyl-sn-glycero-3-phosphoethanolamine binding site. A Zn(2+)-binding site is contributed by H343. Position 348 (A348) interacts with deoxycholate.

Belongs to the NAPE-PLD family. Homodimer. Bile acids promote the assembly of inactive monomers into an active dimer and enable catalysis. It depends on Zn(2+) as a cofactor. In terms of tissue distribution, widely expressed. Highest expression in brain, kidney and testis (at protein level). Expressed in adipose tissue (at protein level).

Its subcellular location is the golgi apparatus membrane. The protein localises to the early endosome membrane. The protein resides in the nucleus envelope. It is found in the nucleus. It localises to the nucleoplasm. It carries out the reaction an N-acyl-1,2-diacyl-sn-glycero-3-phosphoethanolamine + H2O = an N-acylethanolamine + a 1,2-diacyl-sn-glycero-3-phosphate + H(+). The enzyme catalyses N-butanoyl-1-hexadecanoyl-2-(9Z,12Z-octadecadienoyl)-sn-glycero-3-phosphoethanolamine + H2O = N-butanoyl ethanolamine + 1-hexadecanoyl-2-(9Z,12Z-octadecadienoyl)-sn-glycero-3-phosphate + H(+). It catalyses the reaction N-hexanoyl-1-hexadecanoyl-2-(9Z,12Z-octadecadienoyl)-sn-glycero-3-phosphoethanolamine + H2O = N-hexanoyl ethanolamine + 1-hexadecanoyl-2-(9Z,12Z-octadecadienoyl)-sn-glycero-3-phosphate + H(+). The catalysed reaction is N-octanoyl-1-hexadecanoyl-2-(9Z,12Z-octadecadienoyl)-sn-glycero-3-phosphoethanolamine + H2O = N-octanoyl ethanolamine + 1-hexadecanoyl-2-(9Z,12Z-octadecadienoyl)-sn-glycero-3-phosphate + H(+). It carries out the reaction N-decanoyl-1-hexadecanoyl-2-(9Z,12Z-octadecadienoyl)-sn-glycero-3-phosphoethanolamine + H2O = N-decanoyl ethanolamine + 1-hexadecanoyl-2-(9Z,12Z-octadecadienoyl)-sn-glycero-3-phosphate + H(+). The enzyme catalyses N-dodecanoyl-1,2-di-(9Z-octadecenoyl)-sn-glycero-3-phosphoethanolamine + H2O = N-dodecanoylethanolamine + 1,2-di-(9Z-octadecenoyl)-sn-glycero-3-phosphate + H(+). It catalyses the reaction N-tetradecanoyl-1,2-di-(9Z-octadecenoyl)-sn-glycero-3-phosphoethanolamine + H2O = N-tetradecanoylethanolamine + 1,2-di-(9Z-octadecenoyl)-sn-glycero-3-phosphate + H(+). The catalysed reaction is N-hexadecanoyl-1,2-di-(9Z-octadecenoyl)-sn-glycero-3-phosphoethanolamine + H2O = N-hexadecanoylethanolamine + 1,2-di-(9Z-octadecenoyl)-sn-glycero-3-phosphate + H(+). It carries out the reaction N,1-dihexadecanoyl-2-(9Z,12Z-octadecadienoyl)-sn-glycero-3-phosphoethanolamine + H2O = 1-hexadecanoyl-2-(9Z,12Z-octadecadienoyl)-sn-glycero-3-phosphate + N-hexadecanoylethanolamine + H(+). The enzyme catalyses N-octadecanoyl-1,2-di-(9Z-octadecenoyl)-sn-glycero-3-phosphoethanolamine + H2O = N-octadecanoyl ethanolamine + 1,2-di-(9Z-octadecenoyl)-sn-glycero-3-phosphate + H(+). It catalyses the reaction N,1,2-tri-(9Z-octadecenoyl)-sn-glycero-3-phosphoethanolamine + H2O = N-(9Z-octadecenoyl) ethanolamine + 1,2-di-(9Z-octadecenoyl)-sn-glycero-3-phosphate + H(+). The catalysed reaction is N-(5Z,8Z,11Z,14Z-eicosatetraenoyl)-1,2-diacyl-sn-glycero-3-phosphoethanolamine + H2O = N-(5Z,8Z,11Z,14Z-eicosatetraenoyl)-ethanolamine + a 1,2-diacyl-sn-glycero-3-phosphate + H(+). It carries out the reaction N-(5Z,8Z,11Z,14Z-eicosatetraenoyl)-1,2-di-(9Z-octadecenoyl)-sn-glycero-3-phosphoethanolamine + H2O = N-(5Z,8Z,11Z,14Z-eicosatetraenoyl)-ethanolamine + 1,2-di-(9Z-octadecenoyl)-sn-glycero-3-phosphate + H(+). The enzyme catalyses 1-O-(1Z-octadecenoyl)-2-(9Z-octadecenoyl)-sn-glycero-3-phospho-N-hexadecanoyl-ethanolamine + H2O = 1-O-(1Z-octadecenoyl)-2-(9Z-octadecenoyl)-sn-glycero-3-phosphate + N-hexadecanoylethanolamine + H(+). It catalyses the reaction N,1-diacyl-sn-glycero-3-phosphoethanolamine + H2O = an N-acylethanolamine + a 1-acyl-sn-glycero-3-phosphate + H(+). The catalysed reaction is N,1-dihexadecanoyl-sn-glycero-3-phosphoethanolamine + H2O = N-hexadecanoylethanolamine + 1-hexadecanoyl-sn-glycero-3-phosphate + H(+). It carries out the reaction N-(5Z,8Z,11Z,14Z-eicosatetraenoyl)-1-(9Z-octadecenoyl)-sn-glycero-3-phosphoethanolamine + H2O = N-(5Z,8Z,11Z,14Z-eicosatetraenoyl)-ethanolamine + 1-(9Z-octadecenoyl)-sn-glycero-3-phosphate + H(+). Activated by divalent cations. Activated by bile acids. Its function is as follows. D-type phospholipase that hydrolyzes N-acyl-phosphatidylethanolamines (NAPEs) to produce bioactive N-acylethanolamines/fatty acid ethanolamides (NAEs/FAEs) and phosphatidic acid. Cleaves the terminal phosphodiester bond of diacyl- and alkenylacyl-NAPEs, primarily playing a role in the generation of long-chain saturated and monounsaturated NAEs in the brain. May control NAPE homeostasis in dopaminergic neuron membranes and regulate neuron survival, partly through RAC1 activation. As a regulator of lipid metabolism in the adipose tissue, mediates the crosstalk between adipocytes, gut microbiota and immune cells to control body temperature and weight. In particular, regulates energy homeostasis by promoting cold-induced brown or beige adipocyte differentiation program to generate heat from fatty acids and glucose. Has limited D-type phospholipase activity toward N-acyl lyso-NAPEs. This chain is N-acyl-phosphatidylethanolamine-hydrolyzing phospholipase D (NAPEPLD), found in Pongo abelii (Sumatran orangutan).